The primary structure comprises 297 residues: Acetaldehyde dehydrogenase (297 aa).

An NAD(+)-binding site is contributed by 15–18 (SGSI). Residue Cys-130 is the Acyl-thioester intermediate of the active site. NAD(+) is bound by residues 162–170 (SAGIATREN) and Asn-272.

This sequence belongs to the acetaldehyde dehydrogenase family.

It carries out the reaction acetaldehyde + NAD(+) + CoA = acetyl-CoA + NADH + H(+). The protein is Acetaldehyde dehydrogenase (mhpF) of Burkholderia thailandensis (strain ATCC 700388 / DSM 13276 / CCUG 48851 / CIP 106301 / E264).